The sequence spans 210 residues: MSDFGINLDAICDNVKYKSSNSRTGSQVSNRSSRRMDFVDEEELSTYFNSKASVTQSDSCSNDLAVKTSIITEAVICDESEHVSADAIQEKEESIMQVDDNVMKWMMDSHDGISMNGGINFSRSKSKTGRSDFTESKSETSVSAHVSAGISSQLGMFNPIQNTVKKEAISEMFEDEDGDGCTCRNCPYREKYLKLRNKMKSVLVDMINEM.

Asp86 is a Mg(2+) binding site. The interval 119–141 (INFSRSKSKTGRSDFTESKSETS) is disordered. The segment covering 129–138 (GRSDFTESKS) has biased composition (basic and acidic residues).

Belongs to the rotavirus NSP5 family. As to quaternary structure, homodimer. Interacts with VP1. Interacts with VP2. Interacts with NSP2 and NSP6. Mg(2+) serves as cofactor. Post-translationally, O-glycosylated.

The protein localises to the host cytoplasm. Its function is as follows. Plays an essential role in the viral genome replication. Participates, together with NSP2, in the formation of viral factories (viroplasms) which are large inclusions in the host cytoplasm where replication intermediates are assembled and viral RNA replication takes place. Orchestrates the recruitment of viroplasmic proteins such as capsid proteins to these factories. The sequence is that of Non-structural protein 5 from Rotavirus C (strain RVC/Pig/United States/Cowden/1980) (RV-C).